The sequence spans 169 residues: Peptide methionine sulfoxide reductase MsrA (169 aa).

The active site involves Cys10.

Belongs to the MsrA Met sulfoxide reductase family.

The catalysed reaction is L-methionyl-[protein] + [thioredoxin]-disulfide + H2O = L-methionyl-(S)-S-oxide-[protein] + [thioredoxin]-dithiol. It catalyses the reaction [thioredoxin]-disulfide + L-methionine + H2O = L-methionine (S)-S-oxide + [thioredoxin]-dithiol. Functionally, has an important function as a repair enzyme for proteins that have been inactivated by oxidation. Catalyzes the reversible oxidation-reduction of methionine sulfoxide in proteins to methionine. In Streptococcus pyogenes serotype M2 (strain MGAS10270), this protein is Peptide methionine sulfoxide reductase MsrA.